Reading from the N-terminus, the 244-residue chain is tRNA pseudouridine synthase A (244 aa).

Asp52 functions as the Nucleophile in the catalytic mechanism. Tyr110 serves as a coordination point for substrate.

The protein belongs to the tRNA pseudouridine synthase TruA family. As to quaternary structure, homodimer.

The catalysed reaction is uridine(38/39/40) in tRNA = pseudouridine(38/39/40) in tRNA. In terms of biological role, formation of pseudouridine at positions 38, 39 and 40 in the anticodon stem and loop of transfer RNAs. In Brevibacillus brevis (strain 47 / JCM 6285 / NBRC 100599), this protein is tRNA pseudouridine synthase A.